We begin with the raw amino-acid sequence, 368 residues long: Phospho-N-acetylmuramoyl-pentapeptide-transferase (368 aa).

10 consecutive transmembrane segments (helical) span residues Thr-32–Asp-52, Thr-79–Ala-99, Leu-102–Tyr-122, Leu-142–Gly-160, Val-176–Gly-196, Gly-207–Ala-227, Ala-244–Phe-264, Ile-271–Ala-291, Ile-296–Val-316, and Gln-345–Leu-365.

This sequence belongs to the glycosyltransferase 4 family. MraY subfamily. The cofactor is Mg(2+).

It is found in the cell inner membrane. It carries out the reaction UDP-N-acetyl-alpha-D-muramoyl-L-alanyl-gamma-D-glutamyl-meso-2,6-diaminopimeloyl-D-alanyl-D-alanine + di-trans,octa-cis-undecaprenyl phosphate = di-trans,octa-cis-undecaprenyl diphospho-N-acetyl-alpha-D-muramoyl-L-alanyl-D-glutamyl-meso-2,6-diaminopimeloyl-D-alanyl-D-alanine + UMP. It functions in the pathway cell wall biogenesis; peptidoglycan biosynthesis. Catalyzes the initial step of the lipid cycle reactions in the biosynthesis of the cell wall peptidoglycan: transfers peptidoglycan precursor phospho-MurNAc-pentapeptide from UDP-MurNAc-pentapeptide onto the lipid carrier undecaprenyl phosphate, yielding undecaprenyl-pyrophosphoryl-MurNAc-pentapeptide, known as lipid I. The sequence is that of Phospho-N-acetylmuramoyl-pentapeptide-transferase from Nitrobacter winogradskyi (strain ATCC 25391 / DSM 10237 / CIP 104748 / NCIMB 11846 / Nb-255).